A 79-amino-acid polypeptide reads, in one-letter code: Cytochrome b (79 aa).

The next 3 helical transmembrane spans lie at 1–7 (SALFLAM), 31–52 (WLIR…YLHI), and 67–79 (WNIG…LTMA). Residues H37 and H51 each contribute to the heme b site.

The protein belongs to the cytochrome b family. The cytochrome bc1 complex contains 11 subunits: 3 respiratory subunits (MT-CYB, CYC1 and UQCRFS1), 2 core proteins (UQCRC1 and UQCRC2) and 6 low-molecular weight proteins (UQCRH/QCR6, UQCRB/QCR7, UQCRQ/QCR8, UQCR10/QCR9, UQCR11/QCR10 and a cleavage product of UQCRFS1). This cytochrome bc1 complex then forms a dimer. Heme b is required as a cofactor.

It is found in the mitochondrion inner membrane. Its function is as follows. Component of the ubiquinol-cytochrome c reductase complex (complex III or cytochrome b-c1 complex) that is part of the mitochondrial respiratory chain. The b-c1 complex mediates electron transfer from ubiquinol to cytochrome c. Contributes to the generation of a proton gradient across the mitochondrial membrane that is then used for ATP synthesis. The protein is Cytochrome b (MT-CYB) of Dipodomys panamintinus (Panamint kangaroo rat).